We begin with the raw amino-acid sequence, 318 residues long: ATP phosphoribosyltransferase regulatory subunit (318 aa).

The protein belongs to the class-II aminoacyl-tRNA synthetase family. HisZ subfamily. In terms of assembly, heteromultimer composed of HisG and HisZ subunits.

The protein localises to the cytoplasm. Its pathway is amino-acid biosynthesis; L-histidine biosynthesis; L-histidine from 5-phospho-alpha-D-ribose 1-diphosphate: step 1/9. Its function is as follows. Required for the first step of histidine biosynthesis. May allow the feedback regulation of ATP phosphoribosyltransferase activity by histidine. This chain is ATP phosphoribosyltransferase regulatory subunit, found in Lactococcus lactis subsp. cremoris (strain SK11).